We begin with the raw amino-acid sequence, 127 residues long: Riboflavin kinase (127 aa).

10–15 (GLGEGR) contributes to the CDP binding site. Thr39 and Asn41 together coordinate Mg(2+). 2 residues coordinate FMN: Thr96 and Glu104. 109–112 (IQLR) lines the CDP pocket.

This sequence belongs to the archaeal riboflavin kinase family. Mg(2+) is required as a cofactor.

It carries out the reaction riboflavin + CTP = CDP + FMN + H(+). It functions in the pathway cofactor biosynthesis; FMN biosynthesis; FMN from riboflavin (CTP route): step 1/1. Catalyzes the CTP-dependent phosphorylation of riboflavin (vitamin B2) to form flavin mononucleotide (FMN). The protein is Riboflavin kinase of Methanococcus maripaludis (strain C5 / ATCC BAA-1333).